A 343-amino-acid polypeptide reads, in one-letter code: L-threonine 3-dehydrogenase (343 aa).

A Zn(2+)-binding site is contributed by C38. Catalysis depends on charge relay system residues T40 and H43. Positions 63, 64, 93, 96, 99, and 107 each coordinate Zn(2+). Residues I175, D195, R200, 262–264, and 286–287 contribute to the NAD(+) site; these read LGI and IY.

Belongs to the zinc-containing alcohol dehydrogenase family. As to quaternary structure, homotetramer. Zn(2+) serves as cofactor.

Its subcellular location is the cytoplasm. The catalysed reaction is L-threonine + NAD(+) = (2S)-2-amino-3-oxobutanoate + NADH + H(+). It participates in amino-acid degradation; L-threonine degradation via oxydo-reductase pathway; glycine from L-threonine: step 1/2. In terms of biological role, catalyzes the NAD(+)-dependent oxidation of L-threonine to 2-amino-3-ketobutyrate. The polypeptide is L-threonine 3-dehydrogenase (Burkholderia thailandensis (strain ATCC 700388 / DSM 13276 / CCUG 48851 / CIP 106301 / E264)).